Reading from the N-terminus, the 250-residue chain is Ribosomal RNA small subunit methyltransferase J (250 aa).

S-adenosyl-L-methionine is bound by residues 101–102 (RD), 117–118 (ER), 153–154 (SS), and D171.

It belongs to the methyltransferase superfamily. RsmJ family.

The protein resides in the cytoplasm. The enzyme catalyses guanosine(1516) in 16S rRNA + S-adenosyl-L-methionine = N(2)-methylguanosine(1516) in 16S rRNA + S-adenosyl-L-homocysteine + H(+). Functionally, specifically methylates the guanosine in position 1516 of 16S rRNA. The sequence is that of Ribosomal RNA small subunit methyltransferase J from Erwinia tasmaniensis (strain DSM 17950 / CFBP 7177 / CIP 109463 / NCPPB 4357 / Et1/99).